Here is a 33-residue protein sequence, read N- to C-terminus: U1-pseudomyrmecitoxin-Pt1 subunit LS1 (33 aa).

This sequence belongs to the myrmexin family. As to quaternary structure, heterodimer composed of subunit LS1 and subunit SS1 (U1-PSDTX-Pt1b), heterodimer composed of subunit LS1 and SS2 (U1-PSDTX-Pt1b), and heterodimer composed of subunit LS1 and SS3; disulfide-linked. Expressed by the venom gland.

It localises to the secreted. Its function is as follows. This heterodimer may have anti-inflammatory properties, since the myrmexin complex (composed of 6 SS-LS heterodimers) inhibits carrageenin-induced edema in a dose-dependent manner (after subcutaneous injection into rats). The protein is U1-pseudomyrmecitoxin-Pt1 subunit LS1 of Pseudomyrmex triplarinus (Ant).